The chain runs to 449 residues: Probable glucuronosyltransferase 47 A (449 aa).

The Cytoplasmic segment spans residues 1 to 31 (MEHPLECADSCSLAMSWFCNKKCRGWGLMKR). A helical; Signal-anchor for type II membrane protein transmembrane segment spans residues 32–52 (TVVASGLRSVVLLLLFIYFVQ). Residues 53-449 (DVTAEMGHQR…GDLYPWGNDL (397 aa)) lie on the Lumenal side of the membrane. N172 and N433 each carry an N-linked (GlcNAc...) asparagine glycan.

It belongs to the glycosyltransferase 47 family. As to expression, mostly expressed in newly formed or expanding tissues.

The protein resides in the golgi apparatus membrane. Its function is as follows. Involved in the synthesis of glucuronoxylan hemicellulose in secondary cell walls. The polypeptide is Probable glucuronosyltransferase 47 A (Physcomitrium patens (Spreading-leaved earth moss)).